The following is a 117-amino-acid chain: Ig heavy chain V region 102 (117 aa).

The signal sequence occupies residues 1–19 (MGWSCIILFLVATATGVHS). A framework-1 region spans residues 20-49 (HVQLQQPGAELVKPGASVKVSCKASGYTFT). Residues cysteine 41 and cysteine 115 are joined by a disulfide bond. The segment at 50 to 54 (SYWMH) is complementarity-determining-1. The tract at residues 55-68 (WVKQRPGQGLEWIG) is framework-2. The interval 69-85 (RIHPSDSDTNYNQKFKG) is complementarity-determining-2. The segment at 86–117 (KATLTVDKSSSTAYMQLSSLTSEDSAVYYCAI) is framework-3.

The protein is Ig heavy chain V region 102 of Mus musculus (Mouse).